The sequence spans 739 residues: UPF0313 protein YgiQ (739 aa).

The Radical SAM core domain occupies 372–650 (AYEMIRFSVN…KALLRYHDPA (279 aa)). Positions 386, 390, and 393 each coordinate [4Fe-4S] cluster. Residues 686-739 (EARRQNRNTRPALTKHTPMATQCQTPATAKKASSTQSRPVNAGAKKRPKAAVGR) are disordered. The segment covering 704 to 724 (MATQCQTPATAKKASSTQSRP) has biased composition (polar residues). The span at 729 to 739 (AKKRPKAAVGR) shows a compositional bias: basic residues.

The protein belongs to the UPF0313 family. It depends on [4Fe-4S] cluster as a cofactor.

This is UPF0313 protein YgiQ from Escherichia coli O157:H7.